The following is a 530-amino-acid chain: Alpha-(1,3)-fucosyltransferase 4 (530 aa).

2 disordered regions span residues 1–48 (MRRL…RAVP) and 66–113 (HLGG…TPAD). Topologically, residues 1-147 (MRRLWGAARK…GGRRRWRRGR (147 aa)) are cytoplasmic. The segment covering 88 to 106 (ASGERQRRLEPQLQHESRC) has biased composition (basic and acidic residues). A helical; Signal-anchor for type II membrane protein membrane pass occupies residues 148–172 (GLPWTVCVLAAAGLTCTALITYACW). Over 173-530 (GQLPPLPWAS…IRNLASWFER (358 aa)) the chain is Lumenal. N-linked (GlcNAc...) asparagine glycans are attached at residues Asn-216 and Asn-315.

The protein belongs to the glycosyltransferase 10 family.

Its subcellular location is the golgi apparatus. It localises to the golgi stack membrane. The catalysed reaction is a beta-D-galactosyl-(1-&gt;4)-N-acetyl-beta-D-glucosaminyl derivative + GDP-beta-L-fucose = a beta-D-galactosyl-(1-&gt;4)-[alpha-L-fucosyl-(1-&gt;3)]-N-acetyl-beta-D-glucosaminyl derivative + GDP + H(+). It carries out the reaction an N-acetyl-alpha-neuraminyl-(2-&gt;3)-beta-D-galactosyl-(1-&gt;4)-N-acetyl-beta-D-glucosaminyl derivative + GDP-beta-L-fucose = an alpha-Neu5Ac-(2-&gt;3)-beta-D-Gal-(1-&gt;4)-[alpha-L-Fuc-(1-&gt;3)]-beta-D-GlcNAc derivative + GDP + H(+). The enzyme catalyses an alpha-Neu5Ac-(2-&gt;3)-beta-D-Gal-(1-&gt;4)-beta-D-GlcNAc-(1-&gt;3)-beta-D-Gal-(1-&gt;4)-beta-D-GlcNAc derivative + GDP-beta-L-fucose = an alpha-Neu5Ac-(2-&gt;3)-beta-D-Gal-(1-&gt;4)-beta-D-GlcNAc-(1-&gt;3)-beta-D-Gal-(1-&gt;4)-[alpha-L-Fuc-(1-&gt;3)]-beta-D-GlcNAc derivative + GDP + H(+). It catalyses the reaction an alpha-Neu5Ac-(2-&gt;3)-beta-D-Gal-(1-&gt;4)-beta-D-GlcNAc6S derivative + GDP-beta-L-fucose = an alpha-Neu5Ac-(2-&gt;3)-beta-D-Gal-(1-&gt;4)-[alpha-L-Fuc-(1-&gt;3)]-beta-D-GlcNAc6S derivative + GDP + H(+). Its pathway is protein modification; protein glycosylation. Its function is as follows. Catalyzes alpha(1-&gt;3) linkage of fucosyl moiety transferred from GDP-beta-L-fucose to N-acetyl glucosamine (GlcNAc) within type 2 lactosamine (LacNAc, Gal-beta(1-&gt;4)GlcNAc) glycan attached to N- or O-linked glycoproteins. Robustly fucosylates nonsialylated distal LacNAc unit of the polylactosamine chain to form Lewis X antigen (CD15), a glycan determinant known to mediate important cellular functions in development and immunity. Fucosylates with lower efficiency sialylated LacNAc acceptors to form sialyl Lewis X and 6-sulfo sialyl Lewis X determinants that serve as recognition epitopes for C-type lectins. Together with FUT7 contributes to SELE, SELL and SELP selectin ligand biosynthesis and selectin-dependent lymphocyte homing, leukocyte migration and blood leukocyte homeostasis. In a cell type specific manner, may also fucosylate the internal LacNAc unit of the polylactosamine chain to form VIM-2 antigen that serves as recognition epitope for SELE. The chain is Alpha-(1,3)-fucosyltransferase 4 (FUT4) from Pan troglodytes (Chimpanzee).